Consider the following 170-residue polypeptide: Shikimate kinase (170 aa).

11–16 lines the ATP pocket; sequence LSGKST. Ser-15 contacts Mg(2+). Substrate-binding residues include Asp-33, Arg-57, and Gly-79. ATP is bound at residue Arg-119. Arg-137 is a substrate binding site.

This sequence belongs to the shikimate kinase family. In terms of assembly, monomer. Mg(2+) serves as cofactor.

It localises to the cytoplasm. The enzyme catalyses shikimate + ATP = 3-phosphoshikimate + ADP + H(+). It participates in metabolic intermediate biosynthesis; chorismate biosynthesis; chorismate from D-erythrose 4-phosphate and phosphoenolpyruvate: step 5/7. Its function is as follows. Catalyzes the specific phosphorylation of the 3-hydroxyl group of shikimic acid using ATP as a cosubstrate. The chain is Shikimate kinase from Clostridium botulinum (strain Loch Maree / Type A3).